The primary structure comprises 102 residues: MQQARVRLAGVDPDDLDNICGEVQEIADKTGVKVSGPVPLPTKTLEVPSRKSPDGEGTATWEHWEMRVHKRLIDIDADERALRQLMRIQVPNDVNIEIVLED.

Residues 34–58 form a disordered region; it reads VSGPVPLPTKTLEVPSRKSPDGEGT.

Belongs to the universal ribosomal protein uS10 family. In terms of assembly, part of the 30S ribosomal subunit.

Its function is as follows. Involved in the binding of tRNA to the ribosomes. The polypeptide is Small ribosomal subunit protein uS10 (Halobacterium salinarum (strain ATCC 29341 / DSM 671 / R1)).